Reading from the N-terminus, the 242-residue chain is Probable transcriptional regulatory protein BURPS1710b_1385 (242 aa).

This sequence belongs to the TACO1 family.

It localises to the cytoplasm. This Burkholderia pseudomallei (strain 1710b) protein is Probable transcriptional regulatory protein BURPS1710b_1385.